Reading from the N-terminus, the 162-residue chain is NADPH-dependent 7-cyano-7-deazaguanine reductase (162 aa).

Catalysis depends on Cys-53, which acts as the Thioimide intermediate. Residue Asp-60 is the Proton donor of the active site. Substrate is bound by residues 75–77 and 94–95; these read VES and HE.

Belongs to the GTP cyclohydrolase I family. QueF type 1 subfamily.

Its subcellular location is the cytoplasm. It carries out the reaction 7-aminomethyl-7-carbaguanine + 2 NADP(+) = 7-cyano-7-deazaguanine + 2 NADPH + 3 H(+). The protein operates within tRNA modification; tRNA-queuosine biosynthesis. Its function is as follows. Catalyzes the NADPH-dependent reduction of 7-cyano-7-deazaguanine (preQ0) to 7-aminomethyl-7-deazaguanine (preQ1). In Streptococcus mutans serotype c (strain ATCC 700610 / UA159), this protein is NADPH-dependent 7-cyano-7-deazaguanine reductase.